A 156-amino-acid polypeptide reads, in one-letter code: ATP synthase subunit b (156 aa).

Residues 11–31 (AIAFVIFVWFCMKYVWPPLMA) form a helical membrane-spanning segment.

This sequence belongs to the ATPase B chain family. In terms of assembly, F-type ATPases have 2 components, F(1) - the catalytic core - and F(0) - the membrane proton channel. F(1) has five subunits: alpha(3), beta(3), gamma(1), delta(1), epsilon(1). F(0) has three main subunits: a(1), b(2) and c(10-14). The alpha and beta chains form an alternating ring which encloses part of the gamma chain. F(1) is attached to F(0) by a central stalk formed by the gamma and epsilon chains, while a peripheral stalk is formed by the delta and b chains.

The protein localises to the cell inner membrane. Functionally, f(1)F(0) ATP synthase produces ATP from ADP in the presence of a proton or sodium gradient. F-type ATPases consist of two structural domains, F(1) containing the extramembraneous catalytic core and F(0) containing the membrane proton channel, linked together by a central stalk and a peripheral stalk. During catalysis, ATP synthesis in the catalytic domain of F(1) is coupled via a rotary mechanism of the central stalk subunits to proton translocation. Component of the F(0) channel, it forms part of the peripheral stalk, linking F(1) to F(0). The chain is ATP synthase subunit b from Klebsiella pneumoniae (strain 342).